The primary structure comprises 147 residues: Cytochrome c-type biogenesis protein CcmE (147 aa).

At 1 to 7 (MTRKQKR) the chain is on the cytoplasmic side. The helical; Signal-anchor for type II membrane protein transmembrane segment at 8–28 (LSVIVGGLAFLGAATGLTFYA) threads the bilayer. Topologically, residues 29–147 (LGQKASYFYM…KGVWQESKSE (119 aa)) are periplasmic. Heme is bound by residues histidine 122 and tyrosine 126.

Belongs to the CcmE/CycJ family.

It localises to the cell inner membrane. Heme chaperone required for the biogenesis of c-type cytochromes. Transiently binds heme delivered by CcmC and transfers the heme to apo-cytochromes in a process facilitated by CcmF and CcmH. In Mesorhizobium japonicum (strain LMG 29417 / CECT 9101 / MAFF 303099) (Mesorhizobium loti (strain MAFF 303099)), this protein is Cytochrome c-type biogenesis protein CcmE.